The primary structure comprises 287 residues: ATP synthase gamma chain (287 aa).

It belongs to the ATPase gamma chain family. In terms of assembly, F-type ATPases have 2 components, CF(1) - the catalytic core - and CF(0) - the membrane proton channel. CF(1) has five subunits: alpha(3), beta(3), gamma(1), delta(1), epsilon(1). CF(0) has three main subunits: a, b and c.

Its subcellular location is the cell inner membrane. In terms of biological role, produces ATP from ADP in the presence of a proton gradient across the membrane. The gamma chain is believed to be important in regulating ATPase activity and the flow of protons through the CF(0) complex. The protein is ATP synthase gamma chain of Enterobacter sp. (strain 638).